The chain runs to 99 residues: RNA-binding protein Hfq (99 aa).

The region spanning 10 to 71 (DLFLNQLRKE…ISSILPSKPI (62 aa)) is the Sm domain. Positions 77-99 (VQNSQVQNTASQQSNNNQNQESK) are disordered.

This sequence belongs to the Hfq family. In terms of assembly, homohexamer.

Functionally, RNA chaperone that binds small regulatory RNA (sRNAs) and mRNAs to facilitate mRNA translational regulation in response to envelope stress, environmental stress and changes in metabolite concentrations. Also binds with high specificity to tRNAs. The chain is RNA-binding protein Hfq from Caldicellulosiruptor saccharolyticus (strain ATCC 43494 / DSM 8903 / Tp8T 6331).